A 163-amino-acid chain; its full sequence is Zinc finger A20 and AN1 domain-containing stress-associated protein 3 (163 aa).

The A20-type zinc finger occupies 7–41; that stretch reads LQEPRLCANNCGFFGSTATQNLCSKCFRDLQHQEQ. Zn(2+) contacts are provided by Cys-13, Cys-17, Cys-29, and Cys-32. Residues 57 to 101 form a disordered region; the sequence is VGAAASSSVSPPPPPPADSKEIVEAKSEKRAAAEPEEADGPPQDP. Over residues 74–89 the composition is skewed to basic and acidic residues; it reads DSKEIVEAKSEKRAAA. Residues 98–144 form an AN1-type zinc finger; that stretch reads PQDPKRCLTCRRRVGITGFRCRCGFVFCGTHRYAEQHECSFDFKRMG. Zn(2+)-binding residues include Cys-104, Cys-107, Cys-118, Cys-120, Cys-125, His-128, His-134, and Cys-136.

Functionally, may be involved in environmental stress response. This Arabidopsis thaliana (Mouse-ear cress) protein is Zinc finger A20 and AN1 domain-containing stress-associated protein 3 (SAP3).